Here is a 478-residue protein sequence, read N- to C-terminus: Glycogen synthase (478 aa).

An ADP-alpha-D-glucose-binding site is contributed by K15.

It belongs to the glycosyltransferase 1 family. Bacterial/plant glycogen synthase subfamily.

The enzyme catalyses [(1-&gt;4)-alpha-D-glucosyl](n) + ADP-alpha-D-glucose = [(1-&gt;4)-alpha-D-glucosyl](n+1) + ADP + H(+). It functions in the pathway glycan biosynthesis; glycogen biosynthesis. In terms of biological role, synthesizes alpha-1,4-glucan chains using ADP-glucose. This is Glycogen synthase from Clostridium botulinum (strain Eklund 17B / Type B).